Here is a 268-residue protein sequence, read N- to C-terminus: Glutamate 5-kinase (268 aa).

An ATP-binding site is contributed by K15. Residues S55, D142, and N158 each coordinate substrate. Residue 178-179 (SD) coordinates ATP.

It belongs to the glutamate 5-kinase family.

The protein localises to the cytoplasm. It catalyses the reaction L-glutamate + ATP = L-glutamyl 5-phosphate + ADP. It functions in the pathway amino-acid biosynthesis; L-proline biosynthesis; L-glutamate 5-semialdehyde from L-glutamate: step 1/2. Functionally, catalyzes the transfer of a phosphate group to glutamate to form L-glutamate 5-phosphate. The protein is Glutamate 5-kinase of Oenococcus oeni (strain ATCC BAA-331 / PSU-1).